We begin with the raw amino-acid sequence, 202 residues long: Protein-methionine-sulfoxide reductase heme-binding subunit MsrQ (202 aa).

A run of 6 helical transmembrane segments spans residues 8-28, 42-62, 75-95, 110-130, 147-167, and 169-189; these read LAVFLGALAVPAWWLYQAWIF, LGLGALVLLLLTLAMTPLQKL, LGLWCFTYVLLHLSAYCVFIL, PYIIVGMLGFICLFLLAITSN, LVYLILGLGLLHMLWVVRADL, and EWTLYAVVGASLMLLRLPSIA.

This sequence belongs to the MsrQ family. Heterodimer of a catalytic subunit (MsrP) and a heme-binding subunit (MsrQ). Requires FMN as cofactor. Heme b serves as cofactor.

It localises to the cell inner membrane. Part of the MsrPQ system that repairs oxidized periplasmic proteins containing methionine sulfoxide residues (Met-O), using respiratory chain electrons. Thus protects these proteins from oxidative-stress damage caused by reactive species of oxygen and chlorine generated by the host defense mechanisms. MsrPQ is essential for the maintenance of envelope integrity under bleach stress, rescuing a wide series of structurally unrelated periplasmic proteins from methionine oxidation. MsrQ provides electrons for reduction to the reductase catalytic subunit MsrP, using the quinone pool of the respiratory chain. In Pseudomonas aeruginosa (strain LESB58), this protein is Protein-methionine-sulfoxide reductase heme-binding subunit MsrQ.